The chain runs to 339 residues: Ketol-acid reductoisomerase (NADP(+)) (339 aa).

One can recognise a KARI N-terminal Rossmann domain in the interval 1–182 (MRVYYDRDAD…GGGRSGVIET (182 aa)). NADP(+) is bound by residues 24 to 27 (YGSQ), Arg48, Ser51, Thr53, and 83 to 86 (DELQ). The active site involves His108. An NADP(+)-binding site is contributed by Gly134. In terms of domain architecture, KARI C-terminal knotted spans 183–328 (TFKEECETDL…GKLRAMMPWI (146 aa)). 4 residues coordinate Mg(2+): Asp191, Glu195, Glu227, and Glu231. Ser252 lines the substrate pocket.

This sequence belongs to the ketol-acid reductoisomerase family. Requires Mg(2+) as cofactor.

It catalyses the reaction (2R)-2,3-dihydroxy-3-methylbutanoate + NADP(+) = (2S)-2-acetolactate + NADPH + H(+). The catalysed reaction is (2R,3R)-2,3-dihydroxy-3-methylpentanoate + NADP(+) = (S)-2-ethyl-2-hydroxy-3-oxobutanoate + NADPH + H(+). It participates in amino-acid biosynthesis; L-isoleucine biosynthesis; L-isoleucine from 2-oxobutanoate: step 2/4. It functions in the pathway amino-acid biosynthesis; L-valine biosynthesis; L-valine from pyruvate: step 2/4. Its function is as follows. Involved in the biosynthesis of branched-chain amino acids (BCAA). Catalyzes an alkyl-migration followed by a ketol-acid reduction of (S)-2-acetolactate (S2AL) to yield (R)-2,3-dihydroxy-isovalerate. In the isomerase reaction, S2AL is rearranged via a Mg-dependent methyl migration to produce 3-hydroxy-3-methyl-2-ketobutyrate (HMKB). In the reductase reaction, this 2-ketoacid undergoes a metal-dependent reduction by NADPH to yield (R)-2,3-dihydroxy-isovalerate. The polypeptide is Ketol-acid reductoisomerase (NADP(+)) (Brucella abortus (strain S19)).